A 64-amino-acid chain; its full sequence is H/ACA ribonucleoprotein complex subunit 3 (64 aa).

This sequence belongs to the NOP10 family. Component of the box H/ACA small nucleolar ribonucleoprotein (H/ACA snoRNP) complex consisting of Nop60B, Gar1, NPH2 and Nop10, and associated with H/ACA-type snoRNAs.

Its subcellular location is the nucleus. It is found in the nucleolus. Functionally, component of the box H/ACA small nucleolar ribonucleoprotein (H/ACA snoRNP) complex, which catalyzes pseudouridylation of rRNA. This involves the isomerization of uridine such that the ribose is subsequently attached to C5, instead of the normal N1. Pseudouridine ('psi') residues may serve to stabilize the conformation of rRNAs. Required for ribosome biogenesis. H/ACA snoRNP complex-dependent ribosome biogenesis is important in female germline cell differentiation during oogenesis. This Drosophila melanogaster (Fruit fly) protein is H/ACA ribonucleoprotein complex subunit 3.